Reading from the N-terminus, the 1100-residue chain is Formin-like protein 1 (1100 aa).

Positions 1–13 (MGNAAGSAEQPAG) are enriched in low complexity. 4 disordered regions span residues 1–31 (MGNA…PMPA), 167–200 (STDN…PKSR), 446–474 (RFSE…TRPS), and 510–635 (TPSG…AKKP). Residue glycine 2 is the site of N-myristoyl glycine attachment. Serine 7 is modified (phosphoserine). Over residues 14-28 (PAAPPPKQPAPPKQP) the composition is skewed to pro residues. A GBD/FH3 domain is found at 27 to 468 (QPMPAAGELE…PPEPEKAPPA (442 aa)). Serine 184 bears the Phosphoserine mark. Low complexity predominate over residues 517–538 (PTPGVPTGSPSPDLAPAAEPAP). Positions 539 to 615 (GAAPPPPPPL…PPPPPPPGGP (77 aa)) are enriched in pro residues. Serine 624 and serine 693 each carry phosphoserine. The 392-residue stretch at 632 to 1023 (AKKPIQTKFR…QEAGADTPGK (392 aa)) folds into the FH2 domain. The interval 1008 to 1037 (KKEAAAQEAGADTPGKGEPPAPKSPPKARR) is disordered. The span at 1013–1023 (AQEAGADTPGK) shows a compositional bias: low complexity. Serine 1031 carries the post-translational modification Phosphoserine. One can recognise a DAD domain in the interval 1059–1090 (SDRDGAIEDIITVIKTVPFTARTGKRTSRLLC).

Belongs to the formin homology family. In terms of assembly, interacts with RAC1, PFN1 and PFN2. Interacts (activated by RAC1) with SRGAP2 (via SH3 domain); regulates the actin filament severing activity of FMNL1. In terms of processing, myristoylation mediates membrane localization and blebbing. Expressed in heart, brain, placenta, lung, liver, skeletal muscle, kidney and pancreas.

The protein localises to the cytoplasm. It is found in the cell membrane. The protein resides in the cytoplasmic vesicle. It localises to the phagosome. Its subcellular location is the cell cortex. The protein localises to the cell projection. It is found in the bleb. In terms of biological role, may play a role in the control of cell motility and survival of macrophages. Plays a role in the regulation of cell morphology and cytoskeletal organization. Required in the cortical actin filament dynamics and cell shape. In Homo sapiens (Human), this protein is Formin-like protein 1 (FMNL1).